A 334-amino-acid polypeptide reads, in one-letter code: Dual specificity mitogen-activated protein kinase kinase 6 (334 aa).

The span at 1–11 (MSQSKGKKRNP) shows a compositional bias: basic residues. The segment at 1–34 (MSQSKGKKRNPGLKIPKEAFEQPQTSSTPPRDLD) is disordered. The segment at 4 to 19 (SKGKKRNPGLKIPKEA) is d domain. The region spanning 53–314 (LEPIVELGRG…YPELMQHPFF (262 aa)) is the Protein kinase domain. Residues 59-67 (LGRGAYGVV) and lysine 82 each bind ATP. Catalysis depends on aspartate 179, which acts as the Proton acceptor. Position 207 is a phosphoserine; by MAPK3 (serine 207). Threonine 211 carries the post-translational modification Phosphothreonine; by MAPK3. Positions 311–334 (HPFFTVHESKAADVASFVKLILGD) are DVD domain.

This sequence belongs to the protein kinase superfamily. STE Ser/Thr protein kinase family. MAP kinase kinase subfamily. In terms of assembly, dimer. Interacts (via its D domain) with its substrates MAPK11, MAPK12, MAPK13 and MAPK14. Interacts (via its DVD domain) with MAP3Ks activators like MAP3K5/ASK1, MAP3K1/MEKK1, MAP3K2/MEKK2, MAP3K3/MEKK3, MAP3K4/MEKK4, MAP3K7/TAK1, MAP3K11/MLK3 and MAP3K17/TAOK2. Interacts with DCTN1. Interacts with EIF2AK2/PKR. Weakly autophosphorylated. Phosphorylated at Ser-207 and Thr-211 by the majority of M3Ks, such as MAP3K5/ASK1, MAP3K1/MEKK1, MAP3K2/MEKK2, MAP3K3/MEKK3, MAP3K4/MEKK4, MAP3K7/TAK1, MAP3K11/MLK3 and MAP3K17/TAOK2. In terms of processing, in response to genotoxic stress, MAP3K-phosphorylated MAP2K6 is ubiquitinated and degraded by the SCF(FBXO31) complex.

The protein resides in the nucleus. It is found in the cytoplasm. Its subcellular location is the cytoskeleton. The enzyme catalyses L-seryl-[protein] + ATP = O-phospho-L-seryl-[protein] + ADP + H(+). It catalyses the reaction L-threonyl-[protein] + ATP = O-phospho-L-threonyl-[protein] + ADP + H(+). The catalysed reaction is L-tyrosyl-[protein] + ATP = O-phospho-L-tyrosyl-[protein] + ADP + H(+). Its activity is regulated as follows. Activated by dual phosphorylation on Ser-207 and Thr-211 in response to a variety of cellular stresses, including UV radiation, osmotic shock, hypoxia, inflammatory cytokines, interferon gamma (IFNG), and less often by growth factors. MAP2K6/MKK6 is activated by the majority of M3Ks, such as MAP3K5/ASK1, MAP3K1/MEKK1, MAP3K2/MEKK2, MAP3K3/MEKK3, MAP3K4/MEKK4, MAP3K7/TAK1, MAP3K11/MLK3 and MAP3K17/TAOK2. Its function is as follows. Dual specificity protein kinase which acts as an essential component of the MAP kinase signal transduction pathway. With MAP3K3/MKK3, catalyzes the concomitant phosphorylation of a threonine and a tyrosine residue in the MAP kinases p38 MAPK11, MAPK12, MAPK13 and MAPK14 and plays an important role in the regulation of cellular responses to cytokines and all kinds of stresses. Especially, MAP2K3/MKK3 and MAP2K6/MKK6 are both essential for the activation of MAPK11 and MAPK13 induced by environmental stress, whereas MAP2K6/MKK6 is the major MAPK11 activator in response to TNF. MAP2K6/MKK6 also phosphorylates and activates PAK6. The p38 MAP kinase signal transduction pathway leads to direct activation of transcription factors. Nuclear targets of p38 MAP kinase include the transcription factors ATF2 and ELK1. Within the p38 MAPK signal transduction pathway, MAP3K6/MKK6 mediates phosphorylation of STAT4 through MAPK14 activation, and is therefore required for STAT4 activation and STAT4-regulated gene expression in response to IL-12 stimulation. The pathway is also crucial for IL-6-induced SOCS3 expression and down-regulation of IL-6-mediated gene induction; and for IFNG-dependent gene transcription. Has a role in osteoclast differentiation through NF-kappa-B transactivation by TNFSF11, and in endochondral ossification and since SOX9 is another likely downstream target of the p38 MAPK pathway. MAP2K6/MKK6 mediates apoptotic cell death in thymocytes. Acts also as a regulator for melanocytes dendricity, through the modulation of Rho family GTPases. This chain is Dual specificity mitogen-activated protein kinase kinase 6 (Map2k6), found in Mus musculus (Mouse).